A 69-amino-acid polypeptide reads, in one-letter code: Cold shock-like protein CspE (69 aa).

Positions 6 to 66 (GNVKWFNESK…GAKGPSAANV (61 aa)) constitute a CSD domain.

The protein resides in the cytoplasm. In Escherichia coli O6:H1 (strain CFT073 / ATCC 700928 / UPEC), this protein is Cold shock-like protein CspE (cspE).